The primary structure comprises 175 residues: Anterior gradient protein 2 homolog (175 aa).

Positions 1–20 (MEKFSVSAILLLVAISGTLA) are cleaved as a signal peptide. The required to promote cell adhesion stretch occupies residues 21–40 (KDTTVKSGAKKDPKDSRPKL). The interval 24–44 (TVKSGAKKDPKDSRPKLPQTL) is disordered. Residues 29-38 (AKKDPKDSRP) are compositionally biased toward basic and acidic residues. 2 consecutive short sequence motifs (homodimer stabilization; interchain) follow at residues 45–54 (SRGWGDQLIW) and 60–67 (EALYRSKT).

Belongs to the AGR family. Monomer and homodimer. Interacts with LYPD3 and DAG1 (alphaDAG1). Interacts with MUC2; disulfide-linked. As to expression, expressed in lung, skeletal muscle, testis, liver, stomach, colon, small intestine, the goblet cells of the intestine and the mucuous neck cells of the stomach.

The protein localises to the secreted. It is found in the endoplasmic reticulum. Its function is as follows. Required for MUC2 post-transcriptional synthesis and secretion. May play a role in the production of mucus by intestinal cells. Proto-oncogene that may play a role in cell migration, cell differentiation and cell growth. Promotes cell adhesion. The polypeptide is Anterior gradient protein 2 homolog (Agr2) (Mus musculus (Mouse)).